The following is a 487-amino-acid chain: Sodium-coupled neutral amino acid symporter 1 (487 aa).

Residues 1–74 (MMHFKSGLEL…EYIPGTTSLG (74 aa)) lie on the Cytoplasmic side of the membrane. Position 6 is a phosphoserine (Ser6). Thr11 carries the phosphothreonine modification. 4 positions are modified to phosphoserine: Ser25, Ser28, Ser49, and Ser52. Phosphothreonine is present on Thr54. At Ser56 the chain carries Phosphoserine. A helical membrane pass occupies residues 75 to 97 (MSVFNLSNAIMGSGILGLAFALA). The Extracellular segment spans residues 98–112 (NTGILLFLVLLTSVT). Residues 113–133 (LLSIYSINLLLICSKETGCMV) form a helical membrane-spanning segment. Residues 134 to 147 (YEKLGEQVFGTTGK) are Cytoplasmic-facing. The helical transmembrane segment at 148 to 168 (FVIFGATSLQNTGAMLSYLFI) threads the bilayer. Residues 169 to 188 (VKNELPSAIKFLMGKEETFS) lie on the Extracellular side of the membrane. A helical transmembrane segment spans residues 189–211 (AWYVDGRVLVVIVTFGIILPLCL). Over 212-216 (LKNLG) the chain is Cytoplasmic. A helical membrane pass occupies residues 217–237 (YLGYTSGFSLSCMVFFLIVVI). The Extracellular segment spans residues 238–275 (YKKFQIPCIVPELNSTISANSTNADTCTPKYVTFNSKT). Cys245 and Cys264 are disulfide-bonded. Residues Asn251 and Asn257 are each glycosylated (N-linked (GlcNAc...) asparagine). The helical transmembrane segment at 276–296 (VYALPTIAFAFVCHPSVLPIY) threads the bilayer. At 297-312 (SELKDRSQKKMQMVSN) the chain is on the cytoplasmic side. The helical transmembrane segment at 313–333 (ISFFAMFVMYFLTAIFGYLTF) threads the bilayer. Residues 334 to 350 (YDNVQSDLLHKYQSKDD) lie on the Extracellular side of the membrane. A helical membrane pass occupies residues 351–371 (ILILTVRLAVIVAVILTVPVL). Over 372–393 (FFTVRSSLFELAKKTKFNLCRH) the chain is Cytoplasmic. The helical transmembrane segment at 394–414 (TVVTCILLVVINLLVIFIPSM) threads the bilayer. Residues 415–416 (KD) lie on the Extracellular side of the membrane. A helical membrane pass occupies residues 417–437 (IFGVVGVTSANMLIFILPSSL). At 438 to 452 (YLKITDQDGDKGTQR) the chain is on the cytoplasmic side. Residues 453–473 (IWAALFLGLGVLFSLVSIPLV) traverse the membrane as a helical segment. The Extracellular portion of the chain corresponds to 474-487 (IYDWACSSSSDEGH).

It belongs to the amino acid/polyamine transporter 2 family. N-glycosylation plays an important role in the L-glutamine transport. In terms of tissue distribution, expressed in the cerebral cortex by pyramidal and GABAergic neurons, astrocytes and other non-neuronal cells (at protein level). Expressed in placenta, heart, lung, skeletal muscle, spleen, stomach and testis. Highly expressed in cytotrophoblast cells from term placenta.

The protein localises to the cell membrane. The catalysed reaction is L-glutamine(in) + Na(+)(in) = L-glutamine(out) + Na(+)(out). The enzyme catalyses L-alanine(in) + Na(+)(in) = L-alanine(out) + Na(+)(out). It carries out the reaction L-asparagine(in) + Na(+)(in) = L-asparagine(out) + Na(+)(out). It catalyses the reaction L-histidine(in) + Na(+)(in) = L-histidine(out) + Na(+)(out). The catalysed reaction is L-serine(in) + Na(+)(in) = L-serine(out) + Na(+)(out). The enzyme catalyses L-cysteine(in) + Na(+)(in) = L-cysteine(out) + Na(+)(out). It carries out the reaction L-methionine(in) + Na(+)(in) = L-methionine(out) + Na(+)(out). It catalyses the reaction glycine(in) + Na(+)(in) = glycine(out) + Na(+)(out). The catalysed reaction is L-threonine(in) + Na(+)(in) = L-threonine(out) + Na(+)(out). The enzyme catalyses L-proline(in) + Na(+)(in) = L-proline(out) + Na(+)(out). Its activity is regulated as follows. Inhibited by alpha-(methylamino)isobutyric acid (MeAIB). Inhibited by lithium, potassium, choline ions, N-methylglucamine. The pH dependence has an allosteric effect on the transport. In terms of biological role, symporter that cotransports short-chain neutral amino acids and sodium ions from the extraccellular to the intracellular side of the cell membrane. The transport is elctrogenic, pH dependent and driven by the Na(+) electrochemical gradient. Participates in the astroglia-derived glutamine transport into GABAergic interneurons for neurotransmitter GABA de novo synthesis. May also contributes to amino acid transport in placental trophoblasts. Also regulates synaptic plasticity. The polypeptide is Sodium-coupled neutral amino acid symporter 1 (SLC38A1) (Homo sapiens (Human)).